A 434-amino-acid polypeptide reads, in one-letter code: MSFNTIIDWNSCTAEQQRQLLMRPAISASESITRTVNDILDNVKARGDEALREYSAKFDKTTVTALKVSAEEIAAASERLSDELKQAMAVAVKNIETFHTAQKLPPVDVETQPGVRCQQVTRPVASVGLYIPGGSAPLFSTVLMLATPASIAGCKKVVLCSPPPIADEILYAAQLCGVQDVFNVGGAQAIAALAFGTESVPKVDKIFGPGNAFVTEAKRQVSQRLDGAAIDMPAGPSEVLVIADSGATPDFVASDLLSQAEHGPDSQVILLTPAADMARRVAEAVERQLAELPRAETARQALNASRLIVTKDLAQCVEISNQYGPEHLIIQTRNARELVDSITSAGSVFLGDWSPESAGDYASGTNHVLPTYGYTATCSSLGLADFQKRMTVQELSKEGFSALASTIETLAAAERLTAHKNAVTLRVNALKEQA.

3 residues coordinate NAD(+): Tyr130, Gln188, and Asn211. Residues Ser237, Gln259, and His262 each contribute to the substrate site. Positions 259 and 262 each coordinate Zn(2+). Catalysis depends on proton acceptor residues Glu326 and His327. 4 residues coordinate substrate: His327, Asp360, Glu414, and His419. Asp360 contacts Zn(2+). His419 contributes to the Zn(2+) binding site.

It belongs to the histidinol dehydrogenase family. Homodimer. Zn(2+) serves as cofactor.

The enzyme catalyses L-histidinol + 2 NAD(+) + H2O = L-histidine + 2 NADH + 3 H(+). The protein operates within amino-acid biosynthesis; L-histidine biosynthesis; L-histidine from 5-phospho-alpha-D-ribose 1-diphosphate: step 9/9. Its function is as follows. Catalyzes the sequential NAD-dependent oxidations of L-histidinol to L-histidinaldehyde and then to L-histidine. In Escherichia coli (strain K12), this protein is Histidinol dehydrogenase.